A 451-amino-acid polypeptide reads, in one-letter code: NADP-specific glutamate dehydrogenase (451 aa).

Lys-113 is a catalytic residue. Phosphoserine is present on Ser-252.

Belongs to the Glu/Leu/Phe/Val dehydrogenases family. Homohexamer.

The catalysed reaction is L-glutamate + NADP(+) + H2O = 2-oxoglutarate + NH4(+) + NADPH + H(+). This chain is NADP-specific glutamate dehydrogenase (gdh1), found in Schizosaccharomyces pombe (strain 972 / ATCC 24843) (Fission yeast).